Consider the following 449-residue polypeptide: Phosphoglucosamine mutase (449 aa).

The active-site Phosphoserine intermediate is the Ser-102. Mg(2+) contacts are provided by Ser-102, Asp-243, Asp-245, and Asp-247. Ser-102 is modified (phosphoserine).

The protein belongs to the phosphohexose mutase family. Mg(2+) is required as a cofactor. Activated by phosphorylation.

The enzyme catalyses alpha-D-glucosamine 1-phosphate = D-glucosamine 6-phosphate. In terms of biological role, catalyzes the conversion of glucosamine-6-phosphate to glucosamine-1-phosphate. This chain is Phosphoglucosamine mutase, found in Maricaulis maris (strain MCS10) (Caulobacter maris).